The following is an 809-amino-acid chain: Spindle pole body component alp14 (809 aa).

HEAT repeat units lie at residues 127-164 (DSAA…QFGA) and 167-204 (IPSK…WTGD). Disordered regions lie at residues 233–274 (PPKQ…SDDQ), 507–608 (AKAP…SGAL), and 619–638 (ELDD…RYEH). A compositionally biased stretch (polar residues) spans 239 to 253 (FLKSQQPTSEPNVET). Residues 262-274 (ENEESEPEPSDDQ) show a composition bias toward acidic residues. A compositionally biased stretch (basic residues) spans 509–518 (APTKKSKVKP). Low complexity-rich tracts occupy residues 526-551 (VVVP…SPRK) and 582-595 (SRGL…SLQQ). Phosphoserine occurs at positions 543 and 548. Residues 597 to 608 (VKASTPLNSGAL) are compositionally biased toward polar residues. A coiled-coil region spans residues 637-697 (EHPKVLEDND…NTLRSARKAS (61 aa)). Ser697 and Ser720 each carry phosphoserine.

This sequence belongs to the TOG/XMAP215 family. In terms of assembly, interacts with alp14.

It localises to the cytoplasm. The protein localises to the cytoskeleton. It is found in the microtubule organizing center. The protein resides in the spindle pole body. Its subcellular location is the chromosome. It localises to the centromere. The protein localises to the kinetochore. Its function is as follows. Required for bipolar spindle formation and proper chromosome segregation. Has a role in connecting the kinetochores and the plus end of pole to chromosome microtubules. Also required for the activation of the spindle checkpoint pathway. This is Spindle pole body component alp14 (alp14) from Schizosaccharomyces pombe (strain 972 / ATCC 24843) (Fission yeast).